Consider the following 513-residue polypeptide: Nitrogenase molybdenum-iron protein beta chain (513 aa).

Residues Cys-70, Cys-95, and Cys-153 each contribute to the [8Fe-7S] cluster site.

Belongs to the NifD/NifK/NifE/NifN family. As to quaternary structure, tetramer of two alpha and two beta chains. Forms complex with the iron protein (nitrogenase component 2). [8Fe-7S] cluster serves as cofactor.

It carries out the reaction N2 + 8 reduced [2Fe-2S]-[ferredoxin] + 16 ATP + 16 H2O = H2 + 8 oxidized [2Fe-2S]-[ferredoxin] + 2 NH4(+) + 16 ADP + 16 phosphate + 6 H(+). Functionally, this molybdenum-iron protein is part of the nitrogenase complex that catalyzes the key enzymatic reactions in nitrogen fixation. This Sinorhizobium fredii (strain NBRC 101917 / NGR234) protein is Nitrogenase molybdenum-iron protein beta chain (nifK1).